The following is a 429-amino-acid chain: UDP-N-acetylglucosamine 1-carboxyvinyltransferase (429 aa).

Lys-22–Asn-23 contributes to the phosphoenolpyruvate binding site. Arg-102 serves as a coordination point for UDP-N-acetyl-alpha-D-glucosamine. Cys-126 functions as the Proton donor in the catalytic mechanism. Cys-126 carries the 2-(S-cysteinyl)pyruvic acid O-phosphothioketal modification. Residues Arg-131 to Leu-135, Asp-316, and Ile-338 contribute to the UDP-N-acetyl-alpha-D-glucosamine site.

The protein belongs to the EPSP synthase family. MurA subfamily.

It is found in the cytoplasm. The enzyme catalyses phosphoenolpyruvate + UDP-N-acetyl-alpha-D-glucosamine = UDP-N-acetyl-3-O-(1-carboxyvinyl)-alpha-D-glucosamine + phosphate. The protein operates within cell wall biogenesis; peptidoglycan biosynthesis. In terms of biological role, cell wall formation. Adds enolpyruvyl to UDP-N-acetylglucosamine. The sequence is that of UDP-N-acetylglucosamine 1-carboxyvinyltransferase from Afipia carboxidovorans (strain ATCC 49405 / DSM 1227 / KCTC 32145 / OM5) (Oligotropha carboxidovorans).